The sequence spans 73 residues: Large ribosomal subunit protein bL31 (73 aa).

It belongs to the bacterial ribosomal protein bL31 family. Type A subfamily. In terms of assembly, part of the 50S ribosomal subunit.

Its function is as follows. Binds the 23S rRNA. The polypeptide is Large ribosomal subunit protein bL31 (Cereibacter sphaeroides (strain ATCC 17025 / ATH 2.4.3) (Rhodobacter sphaeroides)).